A 374-amino-acid chain; its full sequence is Phosphate acyltransferase (374 aa).

Belongs to the PlsX family. As to quaternary structure, homodimer. Probably interacts with PlsY.

It is found in the cytoplasm. It carries out the reaction a fatty acyl-[ACP] + phosphate = an acyl phosphate + holo-[ACP]. It functions in the pathway lipid metabolism; phospholipid metabolism. Its function is as follows. Catalyzes the reversible formation of acyl-phosphate (acyl-PO(4)) from acyl-[acyl-carrier-protein] (acyl-ACP). This enzyme utilizes acyl-ACP as fatty acyl donor, but not acyl-CoA. The protein is Phosphate acyltransferase of Gluconacetobacter diazotrophicus (strain ATCC 49037 / DSM 5601 / CCUG 37298 / CIP 103539 / LMG 7603 / PAl5).